The sequence spans 804 residues: Protein translocase subunit SecA (804 aa).

ATP contacts are provided by residues Q100, 118-122 (GEGKT), and D508.

It belongs to the SecA family. As to quaternary structure, monomer and homodimer. Part of the essential Sec protein translocation apparatus which comprises SecA, SecYEG and auxiliary proteins SecDF. Other proteins may also be involved.

The protein resides in the cell membrane. The protein localises to the cytoplasm. The enzyme catalyses ATP + H2O + cellular proteinSide 1 = ADP + phosphate + cellular proteinSide 2.. Functionally, part of the Sec protein translocase complex. Interacts with the SecYEG preprotein conducting channel. Has a central role in coupling the hydrolysis of ATP to the transfer of proteins into and across the cell membrane, serving as an ATP-driven molecular motor driving the stepwise translocation of polypeptide chains across the membrane. This chain is Protein translocase subunit SecA, found in Leuconostoc citreum (strain KM20).